Consider the following 274-residue polypeptide: Large ribosomal subunit protein uL2cz/uL2cy (274 aa).

A disordered region spans residues 225–274; the sequence is NPVDHPHGGGEGRAPIGRKKPTTPWGYPALGRRSRKRKKYSDSFILRRRK.

This sequence belongs to the universal ribosomal protein uL2 family. As to quaternary structure, part of the 50S ribosomal subunit.

The protein resides in the plastid. It is found in the chloroplast. In Dioscorea elephantipes (Elephant's foot yam), this protein is Large ribosomal subunit protein uL2cz/uL2cy (rpl2-A).